We begin with the raw amino-acid sequence, 120 residues long: MWGYIHLISWVAIVVLTVTALLIYSKSVKSFTMLQMINRVFYILVILSGIMMVKYSIEQSWILAIFKILMGIIVIGVVEMLLSYRKQQKPTGMFLMIFVIVVVITISLGFYLSGGYPLFN.

The next 4 membrane-spanning stretches (helical) occupy residues 3–23 (GYIHLISWVAIVVLTVTALLI), 33–53 (MLQMINRVFYILVILSGIMMV), 62–82 (ILAIFKILMGIIVIGVVEMLL), and 92–112 (GMFLMIFVIVVVITISLGFYL).

The protein belongs to the UPF0344 family.

It localises to the cell membrane. The polypeptide is UPF0344 protein LMHCC_0278 (Listeria monocytogenes serotype 4a (strain HCC23)).